A 160-amino-acid chain; its full sequence is MPKVIYPGTFDPITNGHTDLIERAGRMFDEIVVAVAYNPKKQPLLNLEERCELVRKATAHLPNVSVTGFSNLLADFVREQNASVILRGLRAVSDFEYEFQLADMNRRLAPEVESVFLTPANHLSYISSTLIREIASLGGDISEFVDPAVTEALQQKFSES.

Threonine 9 provides a ligand contact to substrate. Residues 9–10 and histidine 17 each bind ATP; that span reads TF. Substrate-binding residues include lysine 41, leucine 73, and arginine 87. Residues 88-90, glutamate 98, and 123-129 each bind ATP; these read GLR and LSYISST.

The protein belongs to the bacterial CoaD family. In terms of assembly, homohexamer. Mg(2+) serves as cofactor.

The protein localises to the cytoplasm. It carries out the reaction (R)-4'-phosphopantetheine + ATP + H(+) = 3'-dephospho-CoA + diphosphate. Its pathway is cofactor biosynthesis; coenzyme A biosynthesis; CoA from (R)-pantothenate: step 4/5. Functionally, reversibly transfers an adenylyl group from ATP to 4'-phosphopantetheine, yielding dephospho-CoA (dPCoA) and pyrophosphate. The polypeptide is Phosphopantetheine adenylyltransferase (Marinobacter nauticus (strain ATCC 700491 / DSM 11845 / VT8) (Marinobacter aquaeolei)).